The sequence spans 364 residues: Serine/threonine-protein kinase ENV7 (364 aa).

3 S-palmitoyl cysteine lipidation sites follow: Cys-13, Cys-14, and Cys-15. Residues 30 to 364 enclose the Protein kinase domain; it reads YRIQRLLGEG…LLNLLQDLDT (335 aa). ATP is bound by residues 36–44 and Lys-69; that span reads LGEGGMSFV. Residue Asp-215 is the Proton acceptor of the active site.

The protein belongs to the protein kinase superfamily. Ser/Thr protein kinase family.

Its subcellular location is the vacuole membrane. It carries out the reaction L-seryl-[protein] + ATP = O-phospho-L-seryl-[protein] + ADP + H(+). The enzyme catalyses L-threonyl-[protein] + ATP = O-phospho-L-threonyl-[protein] + ADP + H(+). Serine/threonine-protein kinase involved in vacuolar processing and morphology. The polypeptide is Serine/threonine-protein kinase ENV7 (ENV7) (Saccharomyces cerevisiae (strain ATCC 204508 / S288c) (Baker's yeast)).